The primary structure comprises 505 residues: Aspartyl/glutamyl-tRNA(Asn/Gln) amidotransferase subunit B (505 aa).

This sequence belongs to the GatB/GatE family. GatB subfamily. In terms of assembly, heterotrimer of A, B and C subunits.

The enzyme catalyses L-glutamyl-tRNA(Gln) + L-glutamine + ATP + H2O = L-glutaminyl-tRNA(Gln) + L-glutamate + ADP + phosphate + H(+). The catalysed reaction is L-aspartyl-tRNA(Asn) + L-glutamine + ATP + H2O = L-asparaginyl-tRNA(Asn) + L-glutamate + ADP + phosphate + 2 H(+). Allows the formation of correctly charged Asn-tRNA(Asn) or Gln-tRNA(Gln) through the transamidation of misacylated Asp-tRNA(Asn) or Glu-tRNA(Gln) in organisms which lack either or both of asparaginyl-tRNA or glutaminyl-tRNA synthetases. The reaction takes place in the presence of glutamine and ATP through an activated phospho-Asp-tRNA(Asn) or phospho-Glu-tRNA(Gln). This is Aspartyl/glutamyl-tRNA(Asn/Gln) amidotransferase subunit B from Streptomyces avermitilis (strain ATCC 31267 / DSM 46492 / JCM 5070 / NBRC 14893 / NCIMB 12804 / NRRL 8165 / MA-4680).